Here is an 853-residue protein sequence, read N- to C-terminus: Cytochrome P450 monooxygenase mpaDE' (853 aa).

Residues M1–L6 are Lumenal-facing. A helical membrane pass occupies residues T7–L29. Over K30–K853 the chain is Cytoplasmic. C449 contacts heme.

The protein belongs to the cytochrome P450 family. Heme is required as a cofactor.

It localises to the endoplasmic reticulum membrane. The enzyme catalyses 5-methylorsellinate + reduced [NADPH--hemoprotein reductase] + O2 = 4,6-dihydroxy-2-(hydroxymethyl)-3-methylbenzoate + oxidized [NADPH--hemoprotein reductase] + H2O + H(+). The catalysed reaction is 4,6-dihydroxy-2-(hydroxymethyl)-3-methylbenzoate + H(+) = 5,7-dihydroxy-4-methylphthalide + H2O. Its pathway is secondary metabolite biosynthesis; terpenoid biosynthesis. In terms of biological role, cytochrome P450 monooxygenase; part of the gene cluster that mediates the biosynthesis of mycophenolic acid (MPA), the first isolated antibiotic natural product in the world obtained from a culture of Penicillium brevicompactum in 1893. MpaDE' is an endoplasmic reticulum-bound enzyme that catalyzes the conversion of 5-methylorsellinic acid (5MOA) into the phthalide compound 5,7-dihydroxy-4,6-dimethylphthalide (DHMP). MpaDE' first catalyzes hydroxylation of 5-MOA to 4,6-dihydroxy-2-(hydroxymethyl)-3-methylbenzoic acid (DHMB), and then acts as a lactone synthase that catalyzes the ring closure to convert DHMB into DHMP. The first step of the pathway is the synthesis of 5-methylorsellinic acid (5MOA) by the cytosolic polyketide synthase mpaC. 5MOA is then converted to the phthalide compound 5,7-dihydroxy-4,6-dimethylphthalide (DHMP) by the endoplasmic reticulum-bound cytochrome P450 monooxygenase mpaDE. MpaDE first catalyzes hydroxylation of 5-MOA to 4,6-dihydroxy-2-(hydroxymethyl)-3-methylbenzoic acid (DHMB). MpaDE then acts as a lactone synthase that catalyzes the ring closure to convert DHMB into DHMP. The next step is the prenylation of DHMP by the Golgi apparatus-associated prenyltransferase mpaA to yield farnesyl-DHMP (FDHMP). The ER-bound oxygenase mpaB then mediates the oxidative cleavage the C19-C20 double bond in FDHMP to yield FDHMP-3C via a mycophenolic aldehyde intermediate. The O-methyltransferase mpaG catalyzes the methylation of FDHMP-3C to yield MFDHMP-3C. After the cytosolic methylation of FDHMP-3C, MFDHMP-3C enters into peroxisomes probably via free diffusion due to its low molecular weight. Upon a peroxisomal CoA ligation reaction, catalyzed by a beta-oxidation component enzyme acyl-CoA ligase ACL891, MFDHMP-3C-CoA would then be restricted to peroxisomes for the following beta-oxidation pathway steps. The peroxisomal beta-oxidation machinery than converts MFDHMP-3C-CoA into MPA_CoA, via a beta-oxidation chain-shortening process. Finally mpaH acts as a peroxisomal acyl-CoA hydrolase with high substrate specificity toward MPA-CoA to release the final product MPA. The sequence is that of Cytochrome P450 monooxygenase mpaDE' from Penicillium brevicompactum.